Consider the following 356-residue polypeptide: UDP-N-acetylglucosamine--N-acetylmuramyl-(pentapeptide) pyrophosphoryl-undecaprenol N-acetylglucosamine transferase (356 aa).

UDP-N-acetyl-alpha-D-glucosamine contacts are provided by residues 12–14 (TGG), asparagine 124, arginine 163, serine 188, isoleucine 242, and glutamine 287.

Belongs to the glycosyltransferase 28 family. MurG subfamily.

Its subcellular location is the cell inner membrane. The catalysed reaction is di-trans,octa-cis-undecaprenyl diphospho-N-acetyl-alpha-D-muramoyl-L-alanyl-D-glutamyl-meso-2,6-diaminopimeloyl-D-alanyl-D-alanine + UDP-N-acetyl-alpha-D-glucosamine = di-trans,octa-cis-undecaprenyl diphospho-[N-acetyl-alpha-D-glucosaminyl-(1-&gt;4)]-N-acetyl-alpha-D-muramoyl-L-alanyl-D-glutamyl-meso-2,6-diaminopimeloyl-D-alanyl-D-alanine + UDP + H(+). Its pathway is cell wall biogenesis; peptidoglycan biosynthesis. In terms of biological role, cell wall formation. Catalyzes the transfer of a GlcNAc subunit on undecaprenyl-pyrophosphoryl-MurNAc-pentapeptide (lipid intermediate I) to form undecaprenyl-pyrophosphoryl-MurNAc-(pentapeptide)GlcNAc (lipid intermediate II). The polypeptide is UDP-N-acetylglucosamine--N-acetylmuramyl-(pentapeptide) pyrophosphoryl-undecaprenol N-acetylglucosamine transferase (Pseudomonas fluorescens (strain Pf0-1)).